A 686-amino-acid chain; its full sequence is Acyl-CoA synthetase short-chain family member 3, mitochondrial (686 aa).

A mitochondrion-targeting transit peptide spans 1-29 (MKPSWLQCRKVTGAGGLGGSLPASSPARG). 226-229 (EPGR) lines the CoA pocket. Residues 424-426 (GER) and 445-450 (DHWWQT) each bind ATP. An N6-succinyllysine modification is found at Lys-517. An N6-acetyllysine modification is found at Lys-523. Positions 538, 553, and 564 each coordinate ATP. Arg-623 serves as a coordination point for CoA.

Belongs to the ATP-dependent AMP-binding enzyme family.

The protein localises to the mitochondrion matrix. It catalyses the reaction acetate + ATP + CoA = acetyl-CoA + AMP + diphosphate. The catalysed reaction is propanoate + ATP + CoA = propanoyl-CoA + AMP + diphosphate. The enzyme catalyses butanoate + ATP + CoA = butanoyl-CoA + AMP + diphosphate. Catalyzes the synthesis of acetyl-CoA from short-chain fatty acids. Propionate is the preferred substrate but can also utilize acetate and butyrate with a much lower affinity. This is Acyl-CoA synthetase short-chain family member 3, mitochondrial (ACSS3) from Bos taurus (Bovine).